The sequence spans 319 residues: Acetyl esterase (319 aa).

Residues 91–93 (HGG) carry the Involved in the stabilization of the negatively charged intermediate by the formation of the oxyanion hole motif. Active-site residues include S165, D262, and H292.

The protein belongs to the 'GDXG' lipolytic enzyme family. Homodimer. Interacts with MalT and MelA.

Its subcellular location is the cytoplasm. Displays esterase activity towards short chain fatty esters (acyl chain length of up to 8 carbons). Able to hydrolyze triacetylglycerol (triacetin) and tributyrylglycerol (tributyrin), but not trioleylglycerol (triolein) or cholesterol oleate. Negatively regulates MalT activity by antagonizing maltotriose binding. Inhibits MelA galactosidase activity. The protein is Acetyl esterase of Escherichia coli O9:H4 (strain HS).